A 360-amino-acid chain; its full sequence is Isopentenyl-diphosphate delta-isomerase (360 aa).

12–13 (RK) serves as a coordination point for substrate. FMN is bound by residues S70, 71-73 (SMT), S101, and N130. Residue 101–103 (SMR) coordinates substrate. Q165 is a binding site for substrate. Position 166 (E166) interacts with Mg(2+). FMN-binding positions include K197, 288-290 (GIR), and 309-310 (AG).

The protein belongs to the IPP isomerase type 2 family. Homooctamer. Dimer of tetramers. Requires FMN as cofactor. The cofactor is NADPH. Mg(2+) is required as a cofactor.

It localises to the cytoplasm. The enzyme catalyses isopentenyl diphosphate = dimethylallyl diphosphate. Functionally, involved in the biosynthesis of isoprenoids. Catalyzes the 1,3-allylic rearrangement of the homoallylic substrate isopentenyl (IPP) to its allylic isomer, dimethylallyl diphosphate (DMAPP). The protein is Isopentenyl-diphosphate delta-isomerase of Chlorobium limicola (strain DSM 245 / NBRC 103803 / 6330).